A 482-amino-acid polypeptide reads, in one-letter code: Histone deacetylase 1 (482 aa).

The tract at residues 9 to 321 (RKVCYYYDGD…WTYETAVALD (313 aa)) is histone deacetylase. 1D-myo-inositol 1,4,5,6-tetrakisphosphate-binding residues include Gly-27 and Lys-31. Residue Lys-74 is modified to N6-acetyllysine; alternate. Lys-74 is covalently cross-linked (Glycyl lysine isopeptide (Lys-Gly) (interchain with G-Cter in SUMO2); alternate). His-141 is an active-site residue. 2 residues coordinate Zn(2+): Asp-176 and His-178. An N6-acetyllysine modification is found at Lys-220. Cys-261 is subject to S-nitrosocysteine. Asp-264 contacts Zn(2+). Arg-270 contributes to the 1D-myo-inositol 1,4,5,6-tetrakisphosphate binding site. An S-nitrosocysteine modification is found at Cys-273. Residues 390–400 (PEESGDEDEDD) show a composition bias toward acidic residues. Positions 390–482 (PEESGDEDED…KGVKEEVKLA (93 aa)) are disordered. Phosphoserine is present on residues Ser-393, Ser-406, and Ser-409. Residues 401–416 (PDKRISICSSDKRIAC) are compositionally biased toward basic and acidic residues. Over residues 417-427 (EEEFSDSEEEG) the composition is skewed to acidic residues. Ser-421 and Ser-423 each carry phosphoserine; by CK2. The residue at position 432 (Lys-432) is an N6-methylated lysine; by EHMT2. A Glycyl lysine isopeptide (Lys-Gly) (interchain with G-Cter in SUMO2) cross-link involves residue Lys-438. Over residues 443–482 (VKTEDEKEKDPEEKKEVTEEEKTKEEKPEAKGVKEEVKLA) the composition is skewed to basic and acidic residues. Lys-444 is covalently cross-linked (Glycyl lysine isopeptide (Lys-Gly) (interchain with G-Cter in SUMO2); alternate). Residue Lys-444 forms a Glycyl lysine isopeptide (Lys-Gly) (interchain with G-Cter in SUMO); alternate linkage. Residues Lys-456, Lys-457, and Lys-473 each participate in a glycyl lysine isopeptide (Lys-Gly) (interchain with G-Cter in SUMO2) cross-link. Lys-476 is covalently cross-linked (Glycyl lysine isopeptide (Lys-Gly) (interchain with G-Cter in SUMO2); alternate). Lys-476 is covalently cross-linked (Glycyl lysine isopeptide (Lys-Gly) (interchain with G-Cter in SUMO); alternate). A Glycyl lysine isopeptide (Lys-Gly) (interchain with G-Cter in SUMO2) cross-link involves residue Lys-480.

It belongs to the histone deacetylase family. HD type 1 subfamily. In terms of assembly, part of the core histone deacetylase (HDAC) complex composed of HDAC1, HDAC2, RBBP4 and RBBP7, the core complex associates with SIN3, SAP18 and SAP30 to form the SIN3 HDAC complex. Component of the nucleosome remodeling and deacetylase (NuRD) repressor complex, composed of core proteins MTA1, MTA2, MTA3, RBBP4, RBBP7, HDAC1, HDAC2, MBD2, MBD3, and peripherally associated proteins CDK2AP1, CDK2AP2, GATAD2A, GATAD2B, CHD3, CHD4 and CHD5. The exact stoichiometry of the NuRD complex is unknown, and some subunits such as MBD2 and MBD3, GATAD2A and GATAD2B, and CHD3, CHD4 and CHD5 define mutually exclusive NuRD complexes. Component of a BHC histone deacetylase complex that contains HDAC1, HDAC2, HMG20B/BRAF35, KDM1A, RCOR1/CoREST and PHF21A/BHC80. The BHC complex may also contain ZMYM2, ZNF217, ZMYM3, GSE1 and GTF2I. Component of a mSin3A corepressor complex that contains SIN3A, SAP130, SUDS3/SAP45, ARID4B/SAP180, HDAC1 and HDAC2. Component of the SIN3B complex, which includes SIN3B, HDAC1, PHF12 and MORF4L1. Found in a trimeric complex with APBB1 and TSHZ3; the interaction between HDAC1 and APBB1 is mediated by TSHZ3. Forms a complex comprising APPL1, RUVBL2, APPL2, CTNNB1 and HDAC2. Component of a RCOR/GFI/KDM1A/HDAC complex. Part of a complex composed of TRIM28, HDAC1, HDAC2 and EHMT2. Part of a complex containing at least CDYL, MIER1, MIER2, HDAC1 and HDAC2. The large PER complex involved in the histone deacetylation is composed of at least HDAC1, PER2, SFPQ and SIN3A. Associates with the 9-1-1 complex; interacts with HUS1. Found in a complex with DNMT3A and HDAC7. Found in a complex with YY1, SIN3A and GON4L. Identified in a histone deacetylase complex that contains DNTTIP1, HDAC1 and MIDEAS; this complex assembles into a tetramer that contains four copies of each protein chain. Found in a complex composed of at least SINHCAF, SIN3A, HDAC1, SAP30, RBBP4, OGT and TET1. Interacts with GFI1; the interaction is direct. Interacts directly with GFI1B. Interacts with TSHZ3 (via N-terminus); the interaction is direct. Interacts with APEX1; the interaction is not dependent on the acetylated status of APEX1. Interacts with BANP. Interacts with BAZ2A/TIP5. Interacts with BCL6. Interacts with BCOR. Interacts with BHLHE40/DEC1. Interacts with BRCC3; this interaction is enhanced in the presence of PWWP2B. Interacts with BRMS1. Interacts with BRMS1L. Interacts with C10orf90/FATS (via its N-terminal); the interaction prevents binding of HDAC1 to CDKN1A/p21 and facilitates the acetylation and stabilization of CDKN1A/p21. Interacts with CBFA2T3. Interacts with CCAR2. Interacts with CDK2AP1. Interacts with CHD3. Interacts with CHD4. Interacts with CHFR. Interacts with CIART. Interacts with CDKN1A/p21. Interacts with CDK5 complexed to CDK5R1 (p25). Interacts with CRY1. Interacts with DAXX. Interacts with DDIT3/CHOP. Interacts with DDX5. Interacts with DHX36; this interaction occurs in a RNA-dependent manner. Interacts with DNMT1. Interacts with DNTTIP1. Interacts with E4F1. Interacts with EP300. Interacts with ERCC6. Interacts with GATAD2A. Interacts with HCFC1. Interacts with HDAC9. Interacts with HUS1. Interacts with INSM1. Interacts with KDM4A. Interacts with KDM5A; this interaction impairs histone deacetylation. Interacts with KDM5B. Interacts with KLF1. Interacts with MBD3L2. Interacts with MIER1. Interacts with NFE4. Interacts with NR4A2/NURR1. Interacts with NR1D2 (via C-terminus). Interacts with NRIP1. Interacts with NSD2. Interacts with PACS2. Interacts with PHB2. Interacts with PPHLN1. Interacts with PRDM6. Interacts with PRDM16. Interacts with PWWP2A in a MTA1-dependent manner. Interacts with PWWP2B. Interacts with RB1. Interacts with RERE. Interacts with SANBR (via the BTB domain). Interacts with SAMSN1. Interacts with SAP30L. Interacts with SETDB1. Interacts with SIN3A. Interacts with SMAD3. Interacts with SMAD4; positively regulated by ZBTB7A. Interacts with SMARCAD1. Interacts with SMARCA4/BRG1. Interacts with SMYD2. Interacts with SMYD4 (via MYND-type zinc finger). Interacts with SP1; the interaction deacetylates SP1 and regulates its transcriptional activity. Interacts with SP3; the interaction deacetylates SP3 and regulates its transcriptional activity. In vitro, C(18) ceramides increase this interaction and the subsequent SP3 deacetylation and SP3-mediated repression of the TERT promoter. Interacts with SPEN/MINT. Interacts with SPHK2. Interacts with SUV39H1. Interacts with TGIF. Interacts with TGIF2. Interacts with TRAF6. Interacts with TRIM28; the interaction recruits HDAC1 to E2F1 and inhibits its acetylation. Interacts with TSC22D3 isoform 1; this interaction affects HDAC1 activity on MYOG promoter and thus inhibits MYOD1 transcriptional activity. Interacts with UHRF1. Interacts with UHRF2. Interacts with ZBTB7A. Interacts with ZMYND8. Interacts with ZMYND15. Interacts with ZNF431. Interacts with ZNF516; this interaction is enhanced in the presence of PWWP2B. Interacts with ZNF541. Interacts with ZNF638. Interacts with ZNHIT1. Interacts with the non-histone region of MACROH2A1. Identified in a complex with HDAC2, KCTD19, DNTTIP1 and ZNF541. Interacts with VRK1. (Microbial infection) Interacts with SV40 large T antigen. Requires Zn(2+) as cofactor. Post-translationally, sumoylated on Lys-444 and Lys-476; which promotes enzymatic activity. Desumoylated by SENP1. Phosphorylation on Ser-421 and Ser-423 promotes enzymatic activity and interactions with NuRD and SIN3 complexes. Phosphorylated by CDK5. In terms of processing, ubiquitinated by CHFR, leading to its degradation by the proteasome. Ubiquitinated by KCTD11, leading to proteasomal degradation. Ubiquitous, with higher levels in heart, pancreas and testis, and lower levels in kidney and brain.

The protein localises to the nucleus. The enzyme catalyses N(6)-acetyl-L-lysyl-[histone] + H2O = L-lysyl-[histone] + acetate. It carries out the reaction N(6)-acetyl-L-lysyl-[protein] + H2O = L-lysyl-[protein] + acetate. The catalysed reaction is N(6)-(2E)-butenoyl-L-lysyl-[protein] + H2O = (2E)-2-butenoate + L-lysyl-[protein]. It catalyses the reaction N(6)-[(S)-lactoyl]-L-lysyl-[protein] + H2O = (S)-lactate + L-lysyl-[protein]. Its activity is regulated as follows. Inositol tetraphosphate (1D-myo-inositol 1,4,5,6-tetrakisphosphate) may act as an intermolecular glue between HDAC1 and N-Cor repressor complex components. Its function is as follows. Histone deacetylase that catalyzes the deacetylation of lysine residues on the N-terminal part of the core histones (H2A, H2B, H3 and H4). Histone deacetylation gives a tag for epigenetic repression and plays an important role in transcriptional regulation, cell cycle progression and developmental events. Histone deacetylases act via the formation of large multiprotein complexes. Acts as a component of the histone deacetylase NuRD complex which participates in the remodeling of chromatin. As part of the SIN3B complex is recruited downstream of the constitutively active genes transcriptional start sites through interaction with histones and mitigates histone acetylation and RNA polymerase II progression within transcribed regions contributing to the regulation of transcription. Also functions as a deacetylase for non-histone targets, such as NR1D2, RELA, SP1, SP3, STAT3 and TSHZ3. Deacetylates SP proteins, SP1 and SP3, and regulates their function. Component of the BRG1-RB1-HDAC1 complex, which negatively regulates the CREST-mediated transcription in resting neurons. Upon calcium stimulation, HDAC1 is released from the complex and CREBBP is recruited, which facilitates transcriptional activation. Deacetylates TSHZ3 and regulates its transcriptional repressor activity. Deacetylates 'Lys-310' in RELA and thereby inhibits the transcriptional activity of NF-kappa-B. Deacetylates NR1D2 and abrogates the effect of KAT5-mediated relieving of NR1D2 transcription repression activity. Component of a RCOR/GFI/KDM1A/HDAC complex that suppresses, via histone deacetylase (HDAC) recruitment, a number of genes implicated in multilineage blood cell development. Involved in CIART-mediated transcriptional repression of the circadian transcriptional activator: CLOCK-BMAL1 heterodimer. Required for the transcriptional repression of circadian target genes, such as PER1, mediated by the large PER complex or CRY1 through histone deacetylation. In addition to protein deacetylase activity, also has protein-lysine deacylase activity: acts as a protein decrotonylase and delactylase by mediating decrotonylation ((2E)-butenoyl) and delactylation (lactoyl) of histones, respectively. The polypeptide is Histone deacetylase 1 (Homo sapiens (Human)).